A 507-amino-acid chain; its full sequence is CWF19-like protein DRN1 (507 aa).

At Ser242 the chain carries Phosphoserine.

The protein belongs to the CWF19 family. As to quaternary structure, interacts with DBR1. Interacts with SYF1, a component of the NTC complex. Interacts with lariat-introns and lariat-intermediates.

The protein localises to the nucleus. It is found in the cytoplasm. Involved in branched RNA metabolism, modulating the turnover of lariat-intron pre-mRNAs by the lariat-debranching enzyme DBR1. Enhances the debranching activity of DBR1 in vitro. This chain is CWF19-like protein DRN1 (DRN1), found in Saccharomyces cerevisiae (strain ATCC 204508 / S288c) (Baker's yeast).